Reading from the N-terminus, the 389-residue chain is NADH-dependent butanol dehydrogenase A (389 aa).

Belongs to the iron-containing alcohol dehydrogenase family. Homodimer.

It functions in the pathway alcohol metabolism; butanol biosynthesis. The sequence is that of NADH-dependent butanol dehydrogenase A (bdhA) from Clostridium acetobutylicum (strain ATCC 824 / DSM 792 / JCM 1419 / IAM 19013 / LMG 5710 / NBRC 13948 / NRRL B-527 / VKM B-1787 / 2291 / W).